The following is a 248-amino-acid chain: Enolase-phosphatase E1 (248 aa).

The Mg(2+) site is built by Asp14 and Glu16. Substrate contacts are provided by residues 145 to 146 (SS) and Lys179. Asp204 serves as a coordination point for Mg(2+).

Belongs to the HAD-like hydrolase superfamily. MasA/MtnC family. As to quaternary structure, monomer. Requires Mg(2+) as cofactor.

The protein resides in the cytoplasm. The protein localises to the nucleus. It carries out the reaction 5-methylsulfanyl-2,3-dioxopentyl phosphate + H2O = 1,2-dihydroxy-5-(methylsulfanyl)pent-1-en-3-one + phosphate. Its pathway is amino-acid biosynthesis; L-methionine biosynthesis via salvage pathway; L-methionine from S-methyl-5-thio-alpha-D-ribose 1-phosphate: step 3/6. It functions in the pathway amino-acid biosynthesis; L-methionine biosynthesis via salvage pathway; L-methionine from S-methyl-5-thio-alpha-D-ribose 1-phosphate: step 4/6. Bifunctional enzyme that catalyzes the enolization of 2,3-diketo-5-methylthiopentyl-1-phosphate (DK-MTP-1-P) into the intermediate 2-hydroxy-3-keto-5-methylthiopentenyl-1-phosphate (HK-MTPenyl-1-P), which is then dephosphorylated to form the acireductone 1,2-dihydroxy-3-keto-5-methylthiopentene (DHK-MTPene). The polypeptide is Enolase-phosphatase E1 (Caenorhabditis elegans).